Reading from the N-terminus, the 1847-residue chain is Replication factor C small subunit (1847 aa).

DOD-type homing endonuclease domains follow at residues 179–311, 780–927, and 1348–1508; these read WLGY…RFGI, MLGL…ISGI, and LLGF…EFEV.

Belongs to the activator 1 small subunits family. RfcS subfamily. In terms of assembly, heteromultimer composed of small subunits (RfcS) and large subunits (RfcL). This protein undergoes a protein self splicing that involves a post-translational excision of the intervening region (intein) followed by peptide ligation.

Functionally, part of the RFC clamp loader complex which loads the PCNA sliding clamp onto DNA. The sequence is that of Replication factor C small subunit (rfcS) from Methanocaldococcus jannaschii (strain ATCC 43067 / DSM 2661 / JAL-1 / JCM 10045 / NBRC 100440) (Methanococcus jannaschii).